A 480-amino-acid polypeptide reads, in one-letter code: Aspartyl/glutamyl-tRNA(Asn/Gln) amidotransferase subunit B (480 aa).

Belongs to the GatB/GatE family. GatB subfamily. As to quaternary structure, heterotrimer of A, B and C subunits.

It catalyses the reaction L-glutamyl-tRNA(Gln) + L-glutamine + ATP + H2O = L-glutaminyl-tRNA(Gln) + L-glutamate + ADP + phosphate + H(+). The enzyme catalyses L-aspartyl-tRNA(Asn) + L-glutamine + ATP + H2O = L-asparaginyl-tRNA(Asn) + L-glutamate + ADP + phosphate + 2 H(+). In terms of biological role, allows the formation of correctly charged Asn-tRNA(Asn) or Gln-tRNA(Gln) through the transamidation of misacylated Asp-tRNA(Asn) or Glu-tRNA(Gln) in organisms which lack either or both of asparaginyl-tRNA or glutaminyl-tRNA synthetases. The reaction takes place in the presence of glutamine and ATP through an activated phospho-Asp-tRNA(Asn) or phospho-Glu-tRNA(Gln). This Streptococcus agalactiae serotype III (strain NEM316) protein is Aspartyl/glutamyl-tRNA(Asn/Gln) amidotransferase subunit B.